A 940-amino-acid chain; its full sequence is Coatomer subunit beta (940 aa).

HEAT repeat units follow at residues 11–48 (FLEAPSVDALKTSLESKNDYVKISAMKTILRVVINGDS), 90–125 (QEMILACNSFRNDLQHPNEFIRGATLRFLCKLKEPE), 126–162 (LLDPLIPTVRQCLEHRHAYVRKNAILAVFSIYQVSNH), and 310–347 (SILEDLITDVIPFLSSSDFDVCEKAISIIMGLVSSRNV).

Oligomeric complex that consists of at least the alpha, beta, beta', gamma, delta, epsilon and zeta subunits.

The protein localises to the cytoplasm. Its subcellular location is the golgi apparatus membrane. The protein resides in the cytoplasmic vesicle. It is found in the COPI-coated vesicle membrane. Functionally, the coatomer is a cytosolic protein complex that binds to dilysine motifs and reversibly associates with Golgi non-clathrin-coated vesicles, which further mediate biosynthetic protein transport from the ER, via the Golgi up to the trans Golgi network. Coatomer complex is required for budding from Golgi membranes, and is essential for the retrograde Golgi-to-ER transport of dilysine-tagged proteins. The sequence is that of Coatomer subunit beta (sec26) from Schizosaccharomyces pombe (strain 972 / ATCC 24843) (Fission yeast).